Reading from the N-terminus, the 595-residue chain is Elongation factor 4 (595 aa).

A tr-type G domain is found at 2 to 183 (KNIRNFCIIA…AIVEQVPAPA (182 aa)). GTP is bound by residues 14–19 (DHGKST) and 130–133 (NKVD).

The protein belongs to the TRAFAC class translation factor GTPase superfamily. Classic translation factor GTPase family. LepA subfamily.

Its subcellular location is the cell inner membrane. It carries out the reaction GTP + H2O = GDP + phosphate + H(+). Its function is as follows. Required for accurate and efficient protein synthesis under certain stress conditions. May act as a fidelity factor of the translation reaction, by catalyzing a one-codon backward translocation of tRNAs on improperly translocated ribosomes. Back-translocation proceeds from a post-translocation (POST) complex to a pre-translocation (PRE) complex, thus giving elongation factor G a second chance to translocate the tRNAs correctly. Binds to ribosomes in a GTP-dependent manner. This Porphyromonas gingivalis (strain ATCC 33277 / DSM 20709 / CIP 103683 / JCM 12257 / NCTC 11834 / 2561) protein is Elongation factor 4.